The following is a 361-amino-acid chain: Phosphoserine aminotransferase (361 aa).

R43 serves as a coordination point for L-glutamate. Pyridoxal 5'-phosphate contacts are provided by W103, T153, D173, and Q196. K197 carries the post-translational modification N6-(pyridoxal phosphate)lysine. A pyridoxal 5'-phosphate-binding site is contributed by 238-239; the sequence is NT.

Belongs to the class-V pyridoxal-phosphate-dependent aminotransferase family. SerC subfamily. Homodimer. The cofactor is pyridoxal 5'-phosphate.

It is found in the cytoplasm. The catalysed reaction is O-phospho-L-serine + 2-oxoglutarate = 3-phosphooxypyruvate + L-glutamate. It carries out the reaction 4-(phosphooxy)-L-threonine + 2-oxoglutarate = (R)-3-hydroxy-2-oxo-4-phosphooxybutanoate + L-glutamate. It participates in amino-acid biosynthesis; L-serine biosynthesis; L-serine from 3-phospho-D-glycerate: step 2/3. The protein operates within cofactor biosynthesis; pyridoxine 5'-phosphate biosynthesis; pyridoxine 5'-phosphate from D-erythrose 4-phosphate: step 3/5. In terms of biological role, catalyzes the reversible conversion of 3-phosphohydroxypyruvate to phosphoserine and of 3-hydroxy-2-oxo-4-phosphonooxybutanoate to phosphohydroxythreonine. This is Phosphoserine aminotransferase from Hahella chejuensis (strain KCTC 2396).